Consider the following 191-residue polypeptide: UPF0302 protein USA300HOU_1400 (191 aa).

This sequence belongs to the UPF0302 family.

The chain is UPF0302 protein USA300HOU_1400 from Staphylococcus aureus (strain USA300 / TCH1516).